The following is a 458-amino-acid chain: Cobyrinate a,c-diamide synthase (458 aa).

In terms of domain architecture, GATase cobBQ-type spans 254–445 (KIGVIRDQVF…IHVHFLSDKS (192 aa)). The active-site Nucleophile is the Cys335.

The protein belongs to the CobB/CbiA family. Mg(2+) is required as a cofactor.

It carries out the reaction cob(II)yrinate + 2 L-glutamine + 2 ATP + 2 H2O = cob(II)yrinate a,c diamide + 2 L-glutamate + 2 ADP + 2 phosphate + 2 H(+). Its pathway is cofactor biosynthesis; adenosylcobalamin biosynthesis; cob(II)yrinate a,c-diamide from sirohydrochlorin (anaerobic route): step 10/10. Functionally, catalyzes the ATP-dependent amidation of the two carboxylate groups at positions a and c of cobyrinate, using either L-glutamine or ammonia as the nitrogen source. The protein is Cobyrinate a,c-diamide synthase of Archaeoglobus fulgidus (strain ATCC 49558 / DSM 4304 / JCM 9628 / NBRC 100126 / VC-16).